Here is a 272-residue protein sequence, read N- to C-terminus: Aurora kinase (272 aa).

In terms of domain architecture, Protein kinase spans 10–263 (FEIGRLLGRG…LTEALNHPFI (254 aa)). ATP contacts are provided by residues 16 to 24 (LGRGKFGQV) and lysine 39. Residue aspartate 134 is the Proton acceptor of the active site.

It belongs to the protein kinase superfamily. Ser/Thr protein kinase family. Aurora subfamily.

It is found in the nucleus. The protein localises to the cytoplasm. It localises to the cytoskeleton. The protein resides in the spindle. Its subcellular location is the chromosome. It is found in the centromere. The protein localises to the kinetochore. The enzyme catalyses L-seryl-[protein] + ATP = O-phospho-L-seryl-[protein] + ADP + H(+). The catalysed reaction is L-threonyl-[protein] + ATP = O-phospho-L-threonyl-[protein] + ADP + H(+). In terms of biological role, component of the chromosomal passenger complex (CPC), a complex that acts as a key regulator of chromosome segregation and cytokinesis. Has a role in error-correction of aberrent kinetochore-microtubule attachments to ensure that sister kinetochores become bioriented and connect to opposite poles by promoting spindle assembly checkpoint signaling. The polypeptide is Aurora kinase (IPL1) (Encephalitozoon cuniculi (strain GB-M1) (Microsporidian parasite)).